Reading from the N-terminus, the 511-residue chain is Acetylcholine receptor subunit alpha-type unc-38 (511 aa).

The N-terminal stretch at 1–16 (MRSFWLFLLLLLFCIS) is a signal peptide. Over 17 to 261 (FIKLTEGNED…QLRRKPLFYT (245 aa)) the chain is Extracellular. Residue Asn124 is glycosylated (N-linked (GlcNAc...) asparagine). A disulfide bridge connects residues Cys151 and Cys165. Asn202 carries an N-linked (GlcNAc...) asparagine glycan. Cys238 and Cys239 are disulfide-bonded. A run of 3 helical transmembrane segments spans residues 262–282 (VNLVFPCVGISFLTILVFYLP), 291–311 (LCISILVALTIFFLLLTEIIP), and 324–344 (LLFTMVMVTLSVVVTVISLNL). Topologically, residues 345 to 464 (HFRTPTTHLM…WKYVAMVLDR (120 aa)) are cytoplasmic. Residues 465 to 485 (LFLLIFSIACFVGTVIILLRA) form a helical membrane-spanning segment.

This sequence belongs to the ligand-gated ion channel (TC 1.A.9) family. Acetylcholine receptor (TC 1.A.9.1) subfamily. In terms of assembly, component of nicotinic acetylcholine receptor. In muscles, composed of 2 non-alpha subunits lev-1 and unc-29, and 3 alpha subunits unc-38, unc-63 and lev-8. In cholinergic motoneurons, composed of 2 non-alpha subunits acr-2 and acr-3, and 3 alpha subunits unc-38, unc-63 and acr-12.

It localises to the postsynaptic cell membrane. Its subcellular location is the cell membrane. Alpha subunit of nicotinic acetylcholine receptor (nAChR). Probably acts in cholinergic motoneurons to regulate presynaptic neurotransmitter release, thereby ensuring normal level of excitation of cholinergic motoneurons during locomotion. Involved in nAChR sensitivity to nicotine. This Caenorhabditis elegans protein is Acetylcholine receptor subunit alpha-type unc-38 (unc-38).